Consider the following 146-residue polypeptide: Large ribosomal subunit protein uL16 (146 aa).

The protein belongs to the universal ribosomal protein uL16 family. In terms of assembly, part of the 50S ribosomal subunit.

In terms of biological role, binds 23S rRNA and is also seen to make contacts with the A and possibly P site tRNAs. In Lactobacillus acidophilus (strain ATCC 700396 / NCK56 / N2 / NCFM), this protein is Large ribosomal subunit protein uL16.